A 434-amino-acid chain; its full sequence is Arrestin domain-containing protein 1 (434 aa).

Positions Pro-295 to Thr-345 are disordered. A compositionally biased stretch (polar residues) spans Val-330–Pro-342. Short sequence motifs (PPxY motif) lie at residues Pro-401–Tyr-404 and Pro-414–Tyr-417.

Belongs to the arrestin family. Interacts (via PPxY motifs) with ITCH (via WW domains); the interaction is direct and participates in the recruitment of the ubiquitin-protein ligase ITCH to the NOTCH1 receptor. Interacts with ARRB1 and ARRB2; the interaction is direct. Interacts with TSG101; may recruit TSG101 to the plasma membrane. Interacts (via PPxY motifs) with WWP2 (via WW domains); ubiquitinates ARRDC1. Interacts with SLC11A2; controls the incorporation of SLC11A2 into extracellular vesicles through an ubiquitination-dependent mechanism. Interacts with WWP1 (via WW domains). Interacts with NEDD4 (via WW domains). Interacts with PDCD6IP. Post-translationally, ubiquitinated. Ubiquitination by WWP2; promotes localization to extracellular microvesicles. Ubiquitinated by WWP1.

The protein resides in the cell membrane. Functionally, functions as an adapter recruiting ubiquitin-protein ligases to their specific substrates. Through an ubiquitination-dependent mechanism plays for instance a role in the incorporation of SLC11A2 into extracellular vesicles. More generally, plays a role in the extracellular transport of proteins between cells through the release in the extracellular space of microvesicles. By participating in the ITCH-mediated ubiquitination and subsequent degradation of NOTCH1, negatively regulates the NOTCH signaling pathway. The sequence is that of Arrestin domain-containing protein 1 from Rattus norvegicus (Rat).